Consider the following 360-residue polypeptide: Protein phosphatase methylesterase 1 (360 aa).

The interval 26–50 (DEDDIPEPAVMPPTGNSSSTANTED) is disordered. Residues Ser-167, Asp-192, and His-316 contribute to the active site.

This sequence belongs to the AB hydrolase superfamily.

The enzyme catalyses [phosphatase 2A protein]-C-terminal L-leucine methyl ester + H2O = [phosphatase 2A protein]-C-terminal L-leucine + methanol + H(+). Demethylates proteins that have been reversibly carboxymethylated. Demethylates the phosphatase PP2A catalytic subunit. Involved in the regulation of filamentous growth. In Candida albicans (strain SC5314 / ATCC MYA-2876) (Yeast), this protein is Protein phosphatase methylesterase 1 (PPE1).